A 157-amino-acid polypeptide reads, in one-letter code: Heavy metal-associated isoprenylated plant protein 16 (157 aa).

The HMA domain occupies 2 to 71 (KQKILIRIAM…KVAFAELVSV (70 aa)). The tract at residues 73–115 (KVEPPKDGDKKPEEEKKPEEKKPEEKKPEEKKPEPCCQPWQKP) is disordered. Residues 75–106 (EPPKDGDKKPEEEKKPEEKKPEEKKPEEKKPE) are compositionally biased toward basic and acidic residues. Cys-154 is subject to Cysteine methyl ester. Cys-154 is lipidated: S-farnesyl cysteine. Positions 155-157 (RIM) are cleaved as a propeptide — removed in mature form.

The protein belongs to the HIPP family.

In terms of biological role, probable heavy-metal-binding protein. The protein is Heavy metal-associated isoprenylated plant protein 16 of Arabidopsis thaliana (Mouse-ear cress).